A 302-amino-acid chain; its full sequence is Dermonecrotic toxin LiSicTox-alphaIA2bii (302 aa).

The signal sequence occupies residues 1–14; the sequence is IALILVCWSVLSQA. The propeptide occupies 15–22; that stretch reads AQTDVEGR. Histidine 34 is a catalytic residue. The Mg(2+) site is built by glutamate 54 and aspartate 56. Histidine 70 acts as the Nucleophile in catalysis. Intrachain disulfides connect cysteine 74/cysteine 80 and cysteine 76/cysteine 219. Residue aspartate 114 coordinates Mg(2+). N-linked (GlcNAc...) asparagine glycosylation occurs at asparagine 279.

Belongs to the arthropod phospholipase D family. Class II subfamily. Requires Mg(2+) as cofactor. In terms of tissue distribution, expressed by the venom gland.

The protein resides in the secreted. It carries out the reaction an N-(acyl)-sphingosylphosphocholine = an N-(acyl)-sphingosyl-1,3-cyclic phosphate + choline. The catalysed reaction is an N-(acyl)-sphingosylphosphoethanolamine = an N-(acyl)-sphingosyl-1,3-cyclic phosphate + ethanolamine. The enzyme catalyses a 1-acyl-sn-glycero-3-phosphocholine = a 1-acyl-sn-glycero-2,3-cyclic phosphate + choline. It catalyses the reaction a 1-acyl-sn-glycero-3-phosphoethanolamine = a 1-acyl-sn-glycero-2,3-cyclic phosphate + ethanolamine. Functionally, dermonecrotic toxins cleave the phosphodiester linkage between the phosphate and headgroup of certain phospholipids (sphingolipid and lysolipid substrates), forming an alcohol (often choline) and a cyclic phosphate. This toxin acts on sphingomyelin (SM). It may also act on ceramide phosphoethanolamine (CPE), lysophosphatidylcholine (LPC) and lysophosphatidylethanolamine (LPE), but not on lysophosphatidylserine (LPS), and lysophosphatidylglycerol (LPG). It acts by transphosphatidylation, releasing exclusively cyclic phosphate products as second products. Induces dermonecrosis, hemolysis, increased vascular permeability, edema, inflammatory response, and platelet aggregation. This is Dermonecrotic toxin LiSicTox-alphaIA2bii from Loxosceles intermedia (Brown spider).